Reading from the N-terminus, the 556-residue chain is Oxygen-dependent choline dehydrogenase (556 aa).

6–35 (DYIIIGAGSAGNVLAARLTEDPGVTVLLLE) lines the FAD pocket. His475 functions as the Proton acceptor in the catalytic mechanism.

This sequence belongs to the GMC oxidoreductase family. Requires FAD as cofactor.

It carries out the reaction choline + A = betaine aldehyde + AH2. The catalysed reaction is betaine aldehyde + NAD(+) + H2O = glycine betaine + NADH + 2 H(+). It participates in amine and polyamine biosynthesis; betaine biosynthesis via choline pathway; betaine aldehyde from choline (cytochrome c reductase route): step 1/1. Functionally, involved in the biosynthesis of the osmoprotectant glycine betaine. Catalyzes the oxidation of choline to betaine aldehyde and betaine aldehyde to glycine betaine at the same rate. This chain is Oxygen-dependent choline dehydrogenase, found in Xanthomonas axonopodis pv. citri (strain 306).